Here is a 246-residue protein sequence, read N- to C-terminus: Probable 2-phosphosulfolactate phosphatase (246 aa).

It belongs to the ComB family. The cofactor is Mg(2+).

It carries out the reaction (2R)-O-phospho-3-sulfolactate + H2O = (2R)-3-sulfolactate + phosphate. This Nostoc punctiforme (strain ATCC 29133 / PCC 73102) protein is Probable 2-phosphosulfolactate phosphatase.